The following is a 2626-amino-acid chain: Unconventional myosin-IXa (2626 aa).

The Ras-associating domain occupies 14-112 (NEHTLRIYPG…YRFLLREKNL (99 aa)). Residues 146-1017 (KDFDDLCSLP…ERQHLQDLLH (872 aa)) form the Myosin motor domain. Residues 175–195 (IYTYVGSILIAINPFKFLPIY) traverse the membrane as a helical segment. 239-246 (GESGSGKT) is a binding site for ATP. Serine 755 carries the post-translational modification Phosphoserine. The segment at 908–919 (QAEPYFVKCIRS) is actin-binding. IQ domains are found at residues 1021 to 1041 (LRRI…QQFL), 1043 to 1072 (LRQA…EKDA), 1075 to 1104 (MASA…AAVI), 1116 to 1145 (RHRA…KIIL), and 1139 to 1168 (QRNK…ERLK). The interval 1022–1163 (RRIILLQRWF…RARQRYKALK (142 aa)) is neck or regulatory domain. The segment at 1164 to 2589 (EERLKETKLE…LKNVKNSPQK (1426 aa)) is tail. Residues 1221-1240 (RESSMDFSKESPDKQQERGR) are compositionally biased toward basic and acidic residues. The segment at 1221-1276 (RESSMDFSKESPDKQQERGRSQSGTDLQGDVIVRQRPKSLEDLHQKKVGRAKRESR) is disordered. Serine 1243 is subject to Phosphoserine. Threonine 1245 is modified (phosphothreonine). Residue serine 1259 is modified to Phosphoserine. Residues 1265–1292 (QKKVGRAKRESRRMRELEQAIFSLELLK) are a coiled coil. A compositionally biased stretch (basic residues) spans 1266-1276 (KKVGRAKRESR). Residues serine 1300 and serine 1318 each carry the phosphoserine modification. Residues 1360 to 1375 (PSTFTNPKFDSQNNAL) are compositionally biased toward polar residues. A disordered region spans residues 1360–1397 (PSTFTNPKFDSQNNALSASSETSSTFSGKGASSDSEHL). Low complexity predominate over residues 1376–1386 (SASSETSSTFS). Positions 1493–1540 (TVLKKLEKLNIEKEKRQKQLQQQNEKEMMEQIRQQTDILEKERKAFKT) form a coiled coil. 5 disordered regions span residues 1562–1602 (VERP…PPKD), 1618–1673 (SRTV…SRPI), 1689–1726 (GNPQ…RMAR), 1765–1784 (SELG…SEMT), and 1872–1907 (QYHP…KRGV). 2 stretches are compositionally biased toward basic and acidic residues: residues 1620–1632 (TVKE…RMGT) and 1659–1669 (HRSDDPSREGS). Over residues 1716–1726 (PAHKKKARMAR) the composition is skewed to basic residues. Positions 1772-1784 (SLGQASHSDSEMT) are enriched in polar residues. Positions 1887-1899 (CRKEFKENKEPSP) are enriched in basic and acidic residues. Phosphoserine is present on serine 2016. The Phorbol-ester/DAG-type zinc finger occupies 2067–2116 (GHMFKATQYSIPTYCEYCSSLIWIMDRASVCKLCKYACHKKCCLKTTAKC). Residues 2131 to 2319 (VELSRLTSED…LIVVEQMNKY (189 aa)) form the Rho-GAP domain. The tract at residues 2365–2385 (SGKGRLHRGSHPNPSSPVIVR) is disordered. At serine 2380 the chain carries Phosphoserine. Residues 2408 to 2444 (TDQQQAAMQQEEKVLTEQIENLQKEKEELTFEMLVLE) adopt a coiled-coil conformation. Residues 2449-2527 (DDEALESEAS…NTTSSHGTRK (79 aa)) form a disordered region. Over residues 2504 to 2522 (SLDSVSSSVSSCLSNTTSS) the composition is skewed to low complexity. Residue serine 2542 is modified to Phosphoserine. Positions 2552 to 2614 (PLGQAKSLED…TVDSDCSSTQ (63 aa)) are disordered.

Belongs to the TRAFAC class myosin-kinesin ATPase superfamily. Myosin family. Post-translationally, phosphorylated by ALPK1 following monosodium urate monohydrate (MSU)-induced inflammation. In terms of tissue distribution, expressed at high levels in brain, followed by testis and spleen. Expressed at very low levels, in kidney. Detected abundantly in brain and testis and at lower levels in adrenal gland, kidney, lung and spleen (at protein level). In adrenal gland it is mostly found in the medulla but not in the cortex. In brain, it is found in the cerebellum and the CA2-CA3 regions of the hippocampus.

It is found in the membrane. The protein localises to the cytoplasm. The protein resides in the synapse. It localises to the cell projection. Its subcellular location is the growth cone. Functionally, myosins are actin-based motor molecules with ATPase activity. Unconventional myosins serve in intracellular movements. Regulates Rho by stimulating it's GTPase activity in neurons. Required for the regulation of neurite branching and motor neuron axon guidance. The polypeptide is Unconventional myosin-IXa (Myo9a) (Rattus norvegicus (Rat)).